A 280-amino-acid polypeptide reads, in one-letter code: Probable N-acetyltransferase 14 (280 aa).

2 helical membrane passes run 37-57 (LILHLLTRPLALLLLAILSSI) and 60-80 (CVLHSFVLALVIPVFISVIYL). The disordered stretch occupies residues 111–152 (PDLPNPHLGRAKLTTNQEKTRRRKKAKEKEKMNESEQVDEDE). The N-acetyltransferase domain occupies 116-273 (PHLGRAKLTT…EKGWLGYPLT (158 aa)).

This sequence belongs to the camello family.

It is found in the membrane. In terms of biological role, probable acetyltransferase. The protein is Probable N-acetyltransferase 14 (nat14) of Danio rerio (Zebrafish).